The primary structure comprises 526 residues: NAD(P)H-quinone oxidoreductase subunit 2 (526 aa).

14 helical membrane-spanning segments follow: residues 16–36 (ILPEGIVVITLLVVLVGDLIL), 43–63 (WTPYAAIVGLLGAIVALYTQW), 80–100 (LSIAFRGIIAISAITTILMSV), 110–130 (LGEFICILLTATLGAMFLSGA), 133–153 (LVMIFISLETLSISSYLLTGY), 168–188 (LLIGAASSAIFLYGISLLYGL), 212–232 (LALVIALVFAIAGISFKISAV), 246–266 (PTPVVAFLSVGSKAAGFALAI), 280–300 (WHFVFTALAILSMVLGNVVAL), 308–328 (LLAYSSIGQAGFVMIGLLANT), 336–356 (IFYLLVYLFMNLGGFTCVILF), 380–400 (LGLSLCLLSLGGIPPLAGFFG), 402–422 (IYLFWAGWQAGLYWLVLLGLI), and 468–488 (VGLILSVLATSLAGILSNPLF).

This sequence belongs to the complex I subunit 2 family. In terms of assembly, NDH-1 can be composed of about 15 different subunits; different subcomplexes with different compositions have been identified which probably have different functions.

It localises to the cellular thylakoid membrane. The catalysed reaction is a plastoquinone + NADH + (n+1) H(+)(in) = a plastoquinol + NAD(+) + n H(+)(out). The enzyme catalyses a plastoquinone + NADPH + (n+1) H(+)(in) = a plastoquinol + NADP(+) + n H(+)(out). NDH-1 shuttles electrons from an unknown electron donor, via FMN and iron-sulfur (Fe-S) centers, to quinones in the respiratory and/or the photosynthetic chain. The immediate electron acceptor for the enzyme in this species is believed to be plastoquinone. Couples the redox reaction to proton translocation, and thus conserves the redox energy in a proton gradient. Cyanobacterial NDH-1 also plays a role in inorganic carbon-concentration. The chain is NAD(P)H-quinone oxidoreductase subunit 2 from Trichodesmium erythraeum (strain IMS101).